The primary structure comprises 315 residues: Methionyl-tRNA formyltransferase (315 aa).

113 to 116 (SLLP) provides a ligand contact to (6S)-5,6,7,8-tetrahydrofolate.

It belongs to the Fmt family.

The catalysed reaction is L-methionyl-tRNA(fMet) + (6R)-10-formyltetrahydrofolate = N-formyl-L-methionyl-tRNA(fMet) + (6S)-5,6,7,8-tetrahydrofolate + H(+). In terms of biological role, attaches a formyl group to the free amino group of methionyl-tRNA(fMet). The formyl group appears to play a dual role in the initiator identity of N-formylmethionyl-tRNA by promoting its recognition by IF2 and preventing the misappropriation of this tRNA by the elongation apparatus. The protein is Methionyl-tRNA formyltransferase of Erwinia tasmaniensis (strain DSM 17950 / CFBP 7177 / CIP 109463 / NCPPB 4357 / Et1/99).